A 244-amino-acid chain; its full sequence is Carboxy-S-adenosyl-L-methionine synthase (244 aa).

Residues tyrosine 40, 65–67 (GCS), 90–91 (DN), 119–120 (DI), asparagine 134, and arginine 201 each bind S-adenosyl-L-methionine.

The protein belongs to the class I-like SAM-binding methyltransferase superfamily. Cx-SAM synthase family. As to quaternary structure, homodimer.

It carries out the reaction prephenate + S-adenosyl-L-methionine = carboxy-S-adenosyl-L-methionine + 3-phenylpyruvate + H2O. Its function is as follows. Catalyzes the conversion of S-adenosyl-L-methionine (SAM) to carboxy-S-adenosyl-L-methionine (Cx-SAM). The protein is Carboxy-S-adenosyl-L-methionine synthase of Geobacter sp. (strain M21).